The following is a 253-amino-acid chain: DNA repair protein RecO (253 aa).

The protein belongs to the RecO family.

Its function is as follows. Involved in DNA repair and RecF pathway recombination. The polypeptide is DNA repair protein RecO (Dehalococcoides mccartyi (strain ATCC BAA-2100 / JCM 16839 / KCTC 5957 / BAV1)).